Here is a 205-residue protein sequence, read N- to C-terminus: Orotate phosphoribosyltransferase (205 aa).

116–124 (EDIITTGGS) is a 5-phospho-alpha-D-ribose 1-diphosphate binding site. Residues threonine 120 and arginine 148 each contribute to the orotate site.

This sequence belongs to the purine/pyrimidine phosphoribosyltransferase family. PyrE subfamily. Homodimer. Mg(2+) serves as cofactor.

It carries out the reaction orotidine 5'-phosphate + diphosphate = orotate + 5-phospho-alpha-D-ribose 1-diphosphate. The protein operates within pyrimidine metabolism; UMP biosynthesis via de novo pathway; UMP from orotate: step 1/2. Its function is as follows. Catalyzes the transfer of a ribosyl phosphate group from 5-phosphoribose 1-diphosphate to orotate, leading to the formation of orotidine monophosphate (OMP). This chain is Orotate phosphoribosyltransferase, found in Wolinella succinogenes (strain ATCC 29543 / DSM 1740 / CCUG 13145 / JCM 31913 / LMG 7466 / NCTC 11488 / FDC 602W) (Vibrio succinogenes).